The chain runs to 345 residues: Phosphoribosylformylglycinamidine cyclo-ligase (345 aa).

Belongs to the AIR synthase family.

The protein resides in the cytoplasm. It catalyses the reaction 2-formamido-N(1)-(5-O-phospho-beta-D-ribosyl)acetamidine + ATP = 5-amino-1-(5-phospho-beta-D-ribosyl)imidazole + ADP + phosphate + H(+). The protein operates within purine metabolism; IMP biosynthesis via de novo pathway; 5-amino-1-(5-phospho-D-ribosyl)imidazole from N(2)-formyl-N(1)-(5-phospho-D-ribosyl)glycinamide: step 2/2. The sequence is that of Phosphoribosylformylglycinamidine cyclo-ligase from Shewanella oneidensis (strain ATCC 700550 / JCM 31522 / CIP 106686 / LMG 19005 / NCIMB 14063 / MR-1).